The following is a 253-amino-acid chain: Sulfate transporter CysZ (253 aa).

4 helical membrane passes run phenylalanine 31–phenylalanine 51, leucine 75–isoleucine 95, isoleucine 151–tryptophan 171, and isoleucine 222–valine 242.

Belongs to the CysZ family.

It localises to the cell inner membrane. In terms of biological role, high affinity, high specificity proton-dependent sulfate transporter, which mediates sulfate uptake. Provides the sulfur source for the cysteine synthesis pathway. The polypeptide is Sulfate transporter CysZ (Citrobacter koseri (strain ATCC BAA-895 / CDC 4225-83 / SGSC4696)).